Consider the following 90-residue polypeptide: Co-chaperonin GroES (90 aa).

Belongs to the GroES chaperonin family. As to quaternary structure, heptamer of 7 subunits arranged in a ring. Interacts with the chaperonin GroEL.

It is found in the cytoplasm. Functionally, together with the chaperonin GroEL, plays an essential role in assisting protein folding. The GroEL-GroES system forms a nano-cage that allows encapsulation of the non-native substrate proteins and provides a physical environment optimized to promote and accelerate protein folding. GroES binds to the apical surface of the GroEL ring, thereby capping the opening of the GroEL channel. This is Co-chaperonin GroES from Phocaeicola vulgatus (strain ATCC 8482 / DSM 1447 / JCM 5826 / CCUG 4940 / NBRC 14291 / NCTC 11154) (Bacteroides vulgatus).